We begin with the raw amino-acid sequence, 220 residues long: MAIKDAFNKMISYFDTDGVSEVEEELSSKKQEEPVTKSQQTSRPNQQQQAARASQPQQPKQARPQMQAQQRPQSQSRAAYAERPYQGQSQARVSHDYNDRRATSAPSASSRREQYQHAAHQEQTTIALKYPRKYEDAQEIVDLLIVNECVLIDFQYMLDAQARRCLDFIDGASKVLYGTLQRVGSSMYLLTPSNVSVNIEEMNIPNNGQDIGFDFDMKRR.

A disordered region spans residues 1-120; that stretch reads MAIKDAFNKM…RREQYQHAAH (120 aa). Positions 26–35 are enriched in basic and acidic residues; that stretch reads LSSKKQEEPV. The segment covering 39 to 79 has biased composition (low complexity); sequence QQTSRPNQQQQAARASQPQQPKQARPQMQAQQRPQSQSRAA. The span at 93–102 shows a compositional bias: basic and acidic residues; it reads VSHDYNDRRA.

The protein belongs to the SepF family. As to quaternary structure, homodimer. Interacts with FtsZ.

The protein localises to the cytoplasm. In terms of biological role, cell division protein that is part of the divisome complex and is recruited early to the Z-ring. Probably stimulates Z-ring formation, perhaps through the cross-linking of FtsZ protofilaments. Its function overlaps with FtsA. The protein is Cell division protein SepF of Streptococcus equi subsp. equi (strain 4047).